Here is a 386-residue protein sequence, read N- to C-terminus: Phosphate acyltransferase (386 aa).

Residues 359-386 (PHRARQDELGENKVVGADQSMTAKATGT) form a disordered region. Residues 377-386 (QSMTAKATGT) show a composition bias toward polar residues.

Belongs to the PlsX family. Homodimer. Probably interacts with PlsY.

The protein localises to the cytoplasm. It carries out the reaction a fatty acyl-[ACP] + phosphate = an acyl phosphate + holo-[ACP]. It functions in the pathway lipid metabolism; phospholipid metabolism. Catalyzes the reversible formation of acyl-phosphate (acyl-PO(4)) from acyl-[acyl-carrier-protein] (acyl-ACP). This enzyme utilizes acyl-ACP as fatty acyl donor, but not acyl-CoA. In Beijerinckia indica subsp. indica (strain ATCC 9039 / DSM 1715 / NCIMB 8712), this protein is Phosphate acyltransferase.